The following is a 511-amino-acid chain: Cytochrome P450 93B2 (511 aa).

The helical transmembrane segment at 4 to 24 (LQLIFLLFFFPTLLFLYCLPY) threads the bilayer. Cys447 contacts heme.

Belongs to the cytochrome P450 family. Requires heme as cofactor.

It is found in the membrane. The enzyme catalyses a flavanone + reduced [NADPH--hemoprotein reductase] + O2 = a flavone + oxidized [NADPH--hemoprotein reductase] + 2 H2O + H(+). Its pathway is secondary metabolite biosynthesis; flavonoid biosynthesis. Functions as a flavone synthase II (FNSII) that catalyzes the direct conversion of flavanones to flavones. In vitro, can convert liquiritigenin, naringenin and eriodictyol to 7,4'-dihydroxyflavone, apigenin and luteolin, respectively. This Gerbera hybrida (Daisy) protein is Cytochrome P450 93B2.